We begin with the raw amino-acid sequence, 218 residues long: MFEYLIKFYPKIFFIVEGTLVTLKYSVIAVIFGLVIGMLLAICKVNKNRALRLFANFYTSIFRGTPLLIQLSIIYFASPYIIGIKFSVFMAGAIAFSLNSGAYVSEVIRAGINAVDKGQFEAAEALAIPKFLITKDIILPQAVKNIFPSLVNELVNLIKESAIISMLGEMDLMRRAQIVSIETYNYFFPMLIAACCYYILVMLISFIAKIIEKKMIVN.

One can recognise an ABC transmembrane type-1 domain in the interval 19 to 208; that stretch reads TLVTLKYSVI…ILVMLISFIA (190 aa). Helical transmembrane passes span 25–45, 57–79, 86–108, and 187–207; these read YSVI…ICKV, FYTS…FASP, FSVF…SEVI, and FFPM…ISFI.

Belongs to the binding-protein-dependent transport system permease family. HisMQ subfamily.

The protein localises to the cell inner membrane. Its function is as follows. Part of the binding-protein-dependent transport system for glutamine; probably responsible for the translocation of the substrate across the membrane. This Rickettsia conorii (strain ATCC VR-613 / Malish 7) protein is Putative glutamine transport system permease protein GlnP (glnP).